Consider the following 275-residue polypeptide: NADPH-dependent 7-cyano-7-deazaguanine reductase (275 aa).

Substrate is bound at residue 81–83; that stretch reads VES. 83-84 is a binding site for NADPH; sequence SK. The Thioimide intermediate role is filled by cysteine 182. The Proton donor role is filled by aspartate 189. 221 to 222 lines the substrate pocket; it reads HE. 250–251 provides a ligand contact to NADPH; the sequence is RG.

This sequence belongs to the GTP cyclohydrolase I family. QueF type 2 subfamily. In terms of assembly, homodimer.

It is found in the cytoplasm. It catalyses the reaction 7-aminomethyl-7-carbaguanine + 2 NADP(+) = 7-cyano-7-deazaguanine + 2 NADPH + 3 H(+). The protein operates within tRNA modification; tRNA-queuosine biosynthesis. In terms of biological role, catalyzes the NADPH-dependent reduction of 7-cyano-7-deazaguanine (preQ0) to 7-aminomethyl-7-deazaguanine (preQ1). The sequence is that of NADPH-dependent 7-cyano-7-deazaguanine reductase from Polaromonas sp. (strain JS666 / ATCC BAA-500).